We begin with the raw amino-acid sequence, 342 residues long: Alpha-(1,3)-fucosyltransferase 7 (342 aa).

Residues 1 to 11 lie on the Cytoplasmic side of the membrane; the sequence is MQNAGLSPTPS. Residues 12–31 form a helical; Signal-anchor for type II membrane protein membrane-spanning segment; it reads LRALGGLAMAALLSTVWLWW. Residues 32-342 are Extracellular-facing; the sequence is RLGAAPGGAP…YQDLEGWFQA (311 aa). Cys68 and Cys76 form a disulfide bridge. Residue Asn81 is glycosylated (N-linked (GlcNAc...) asparagine). Cys211 and Cys214 form a disulfide bridge. N-linked (GlcNAc...) asparagine glycosylation occurs at Asn291. The cysteines at positions 318 and 321 are disulfide-linked.

It belongs to the glycosyltransferase 10 family. In terms of processing, N-glycosylated. As to expression, expressed in thymus, spleen, liver and lung. Highly expressed in the thymus and lower expressed in the lung.

It is found in the membrane. The catalysed reaction is an N-acetyl-alpha-neuraminyl-(2-&gt;3)-beta-D-galactosyl-(1-&gt;4)-N-acetyl-beta-D-glucosaminyl derivative + GDP-beta-L-fucose = an alpha-Neu5Ac-(2-&gt;3)-beta-D-Gal-(1-&gt;4)-[alpha-L-Fuc-(1-&gt;3)]-beta-D-GlcNAc derivative + GDP + H(+). The enzyme catalyses a neolactoside IV(3)-alpha-NeuAc-nLc4Cer + GDP-beta-L-fucose = a neolactoside IV(3)-alpha-NeuNAc,III(3)-alpha-Fuc-nLc4Cer + GDP + H(+). It carries out the reaction a neolactoside VI(3)-alpha-NeuNAc-nLc6Cer + GDP-beta-L-fucose = a neolactoside VI(3)-alpha-NeuAc,V(3)-alphaFuc-nLc6Cer + GDP + H(+). It catalyses the reaction an alpha-Neu5Ac-(2-&gt;3)-beta-D-Gal-(1-&gt;4)-beta-D-GlcNAc-(1-&gt;3)-beta-D-Gal-(1-&gt;4)-[alpha-L-Fuc-(1-&gt;3)]-beta-D-GlcNAc derivative + GDP-beta-L-fucose = an alpha-Neu5Ac-(2-&gt;3)-beta-D-Gal-(1-&gt;4)-[alpha-L-Fuc-(1-&gt;3)]-beta-D-GlcNAc-(1-&gt;3)-beta-D-Gal-(1-&gt;4)-[alpha-L-Fuc-(1-&gt;3)]-beta-D-GlcNAc derivative + GDP + H(+). The catalysed reaction is an alpha-Neu5Ac-(2-&gt;3)-beta-D-Gal-(1-&gt;4)-beta-D-GlcNAc6S derivative + GDP-beta-L-fucose = an alpha-Neu5Ac-(2-&gt;3)-beta-D-Gal-(1-&gt;4)-[alpha-L-Fuc-(1-&gt;3)]-beta-D-GlcNAc6S derivative + GDP + H(+). The enzyme catalyses alpha-Neu5Ac-(2-&gt;3)-beta-D-Gal-(1-&gt;4)-beta-D-GlcNAc-(1-&gt;3)-beta-D-Gal-(1-&gt;4)-D-Glc + GDP-beta-L-fucose = alpha-Neu5Ac-(2-&gt;3)-beta-D-Gal-(1-&gt;4)-[alpha-L-Fuc-(1-&gt;3)]-beta-D-GlcNAc-(1-&gt;3)-beta-D-Gal-(1-&gt;4)-D-Glc + GDP + H(+). It carries out the reaction alpha-Neu5Ac-(2-&gt;3)-beta-D-Gal-(1-&gt;4)-beta-D-GlcNAc-(1-&gt;3)-beta-D-Gal-(1-&gt;4)-[alpha-L-Fuc-(1-&gt;3)]-beta-D-GlcNAc-(1-&gt;3)-beta-D-Gal-(1-&gt;4)-beta-D-GlcNAc + GDP-beta-L-fucose = alpha-Neu5Ac-(2-&gt;3)-beta-D-Gal-(1-&gt;4)-[alpha-L-Fuc-(1-&gt;3)]-beta-D-GlcNAc-(1-&gt;3)-beta-D-Gal-(1-&gt;4)-[alpha-L-Fuc-(1-&gt;3)]-beta-D-GlcNAc-(1-&gt;3)-beta-D-Gal-(1-&gt;4)-beta-D-GlcNAc + GDP + H(+). It catalyses the reaction alpha-Neu5Ac-(2-&gt;3)-beta-D-Gal-(1-&gt;4)-beta-D-GlcNAc-(1-&gt;3)-beta-D-Gal-(1-&gt;4)-beta-D-GlcNAc-(1-&gt;3)-beta-D-Gal-(1-&gt;4)-beta-D-GlcNAc + GDP-beta-L-fucose = alpha-Neu5Ac-(2-&gt;3)-beta-D-Gal-(1-&gt;4)-[alpha-L-Fuc-(1-&gt;3)]-beta-D-GlcNAc-(1-&gt;3)-beta-D-Gal-(1-&gt;4)-beta-D-GlcNAc-(1-&gt;3)-beta-D-Gal-(1-&gt;4)-beta-D-GlcNAc + GDP + H(+). It functions in the pathway protein modification; protein glycosylation. With respect to regulation, inhibited by NaCl. Inhibited by GDP in a concentration dependent manner, with an IC(50) value of 93 uM. Also inhibited by GMP and GTP. Inhibited by N-ethylmaleimide. Activated by poly(ethylene glycol) by enhancing the thermal stability of FUT7. Activated by Mn2+, Ca2+, and Mg2+. Both panosialin A and B inhibit activity with IC(50) values of 4.8 and 5.3 ug/ml, respectively. Inhibited by gallic acid (GA) and (-)-epigallocatechin gallate (EGCG) in a time-dependent and irreversible manner with IC(50) values of 60 and 700 nM, respectively. In terms of biological role, catalyzes the transfer of L-fucose, from a guanosine diphosphate-beta-L-fucose, to the N-acetyl glucosamine (GlcNAc) of a distal alpha2,3 sialylated lactosamine unit of a glycoprotein or a glycolipid-linked sialopolylactosamines chain through an alpha-1,3 glycosidic linkage and participates in the final fucosylation step in the biosynthesis of the sialyl Lewis X (sLe(x)), a carbohydrate involved in cell and matrix adhesion during leukocyte trafficking and fertilization. In vitro, also synthesizes sialyl-dimeric-Lex structures, from VIM-2 structures and both di-fucosylated and trifucosylated structures from mono-fucosylated precursors. However does not catalyze alpha 1-3 fucosylation when an internal alpha 1-3 fucosylation is present in polylactosamine chain and the fucosylation rate of the internal GlcNAc residues is reduced once fucose has been added to the distal GlcNAc. Also catalyzes the transfer of a fucose from GDP-beta-fucose to the 6-sulfated a(2,3)sialylated substrate to produce 6-sulfo sLex mediating significant L-selectin-dependent cell adhesion. Through sialyl-Lewis(x) biosynthesis, can control SELE- and SELP-mediated cell adhesion with leukocytes and allows leukocytes tethering and rolling along the endothelial tissue thereby enabling the leukocytes to accumulate at a site of inflammation. May enhance embryo implantation through sialyl Lewis X (sLeX)-mediated adhesion of embryo cells to endometrium. May affect insulin signaling by up-regulating the phosphorylation and expression of some signaling molecules involved in the insulin-signaling pathway through SLe(x) which is present on the glycans of the INSRR alpha subunit. The chain is Alpha-(1,3)-fucosyltransferase 7 from Bos taurus (Bovine).